The sequence spans 726 residues: Catalase-peroxidase (726 aa).

Residues methionine 1–histidine 34 form a disordered region. The segment at residues tryptophan 105–tyrosine 226 is a cross-link (tryptophyl-tyrosyl-methioninium (Trp-Tyr) (with M-252)). Histidine 106 serves as the catalytic Proton acceptor. The tryptophyl-tyrosyl-methioninium (Tyr-Met) (with W-105) cross-link spans tyrosine 226–methionine 252. Histidine 267 lines the heme b pocket.

This sequence belongs to the peroxidase family. Peroxidase/catalase subfamily. In terms of assembly, homodimer or homotetramer. Heme b serves as cofactor. Post-translationally, formation of the three residue Trp-Tyr-Met cross-link is important for the catalase, but not the peroxidase activity of the enzyme.

It catalyses the reaction H2O2 + AH2 = A + 2 H2O. The enzyme catalyses 2 H2O2 = O2 + 2 H2O. Bifunctional enzyme with both catalase and broad-spectrum peroxidase activity. The chain is Catalase-peroxidase from Citrobacter koseri (strain ATCC BAA-895 / CDC 4225-83 / SGSC4696).